We begin with the raw amino-acid sequence, 392 residues long: MKPLVPLLFLLVSCRAQGNDKLTFANNQFGLRLLNTLPSPPEENVFFSPYSVSTALGMAYAGARGDTQEELSEQLGYTAAGLSQDDVFNAYSDHTQWLKASRSNSTLSVANAAVLHDKVGLRYTFQRTIDHAFDADILKVDFVNERKGAVDRINYWVKDKTNGKIRSLFNKPLESETRLVLLNAIYFKGSWNTRFNKSRTEKSEFLNGGVTPTKVDMMMGSMNIGHHFFRDLKIDVADFPYQGRDYSMTVILPWRNDGVEAIKQNLTLDLFQKLVSELRERRVFVLFPKFKIEAEYSLKEPLQNLGIKQIFSGGSDLSGVTNDNDLVVSAVVHKAVLEVNEEGSEAAAVSSVVAVTRIGTQAFEFNVDHPFLFFIRNTVTNDILFAGQVNSL.

An N-terminal signal peptide occupies residues methionine 1 to alanine 16. 3 N-linked (GlcNAc...) asparagine glycosylation sites follow: asparagine 104, asparagine 196, and asparagine 265.

This sequence belongs to the serpin family. As to quaternary structure, interacts with human KLKB1. Interacts with human ST14. Interacts with human PLG (plasmin). In terms of tissue distribution, highly expressed in salivary gland. Expressed in midgut and ovary.

Its subcellular location is the secreted. Serine protease inhibitor that modulates blood feeding of ticks on vertebrate species. Modestly inhibits human trypsin, plasma kallikrein (KLKB1), matriptase (ST14) and plasmin (PLG) via a classic serpin inhibitory mechanism. Modestly reduces enzymatic activity of human alpha-chymotrypsin, coagulation factor Xa (F10), factor XIIa (F12), cathepsin G (CTSG), tPA/tissue-type plasminogen activator (PLAT) and uPA/urokinase-type plasminogen activator (PLAU). Probably acts as a substrate rather than an inhibitor for the human neutrophil elastase (ELANE) and thus reduces its enzymatic activity in in vitro assays. Decreases expression of adhesion molecules VCAM1 and CD99 on the surface of human cells. Increases the production of chemokines for neutrophils and monocytes, such as KC/CXCL1, MIP-2/CXCL2 and MIP-1/CCL2, and anti-inflammatory cytokine IL10 in mouse inflammation models. Reduces the recruitment of mouse neutrophils and monocytes to the site of inflammation. Decreases expression of CXCR2 on the surface of mouse neutrophils. Increases expression of integrin ITGAM/ITGB2 on the surface of mouse neutrophils. This chain is Iripin-1, found in Ixodes ricinus (Common tick).